The primary structure comprises 361 residues: Chorismate synthase (361 aa).

NADP(+) contacts are provided by Arg-48 and Arg-54. FMN-binding positions include 125–127 (RSS), 238–239 (NA), Gly-278, 293–297 (KPTSS), and Arg-319.

It belongs to the chorismate synthase family. Homotetramer. The cofactor is FMNH2.

The catalysed reaction is 5-O-(1-carboxyvinyl)-3-phosphoshikimate = chorismate + phosphate. The protein operates within metabolic intermediate biosynthesis; chorismate biosynthesis; chorismate from D-erythrose 4-phosphate and phosphoenolpyruvate: step 7/7. Functionally, catalyzes the anti-1,4-elimination of the C-3 phosphate and the C-6 proR hydrogen from 5-enolpyruvylshikimate-3-phosphate (EPSP) to yield chorismate, which is the branch point compound that serves as the starting substrate for the three terminal pathways of aromatic amino acid biosynthesis. This reaction introduces a second double bond into the aromatic ring system. The sequence is that of Chorismate synthase from Escherichia coli (strain K12 / MC4100 / BW2952).